A 406-amino-acid chain; its full sequence is Cysteine--tRNA ligase (406 aa).

Zn(2+) is bound at residue cysteine 16. A 'HIGH' region motif is present at residues 18 to 28; it reads PTVYSDVHIGN. Zn(2+)-binding residues include cysteine 192, histidine 218, and glutamate 222. The short motif at 250-254 is the 'KMSKS' region element; it reads KMAKS. Lysine 253 lines the ATP pocket.

The protein belongs to the class-I aminoacyl-tRNA synthetase family. In terms of assembly, monomer. Zn(2+) serves as cofactor.

It localises to the cytoplasm. The catalysed reaction is tRNA(Cys) + L-cysteine + ATP = L-cysteinyl-tRNA(Cys) + AMP + diphosphate. In Mesomycoplasma hyopneumoniae (strain J / ATCC 25934 / NCTC 10110) (Mycoplasma hyopneumoniae), this protein is Cysteine--tRNA ligase.